The following is a 309-amino-acid chain: Coproporphyrin III ferrochelatase (309 aa).

Residues Tyr12, Thr14, Arg29, 45–46 (RY), Ser53, and Tyr124 each bind Fe-coproporphyrin III. Fe(2+) is bound by residues His182 and Glu263.

This sequence belongs to the ferrochelatase family. As to quaternary structure, monomer.

The protein localises to the cytoplasm. It carries out the reaction Fe-coproporphyrin III + 2 H(+) = coproporphyrin III + Fe(2+). It participates in porphyrin-containing compound metabolism; protoheme biosynthesis. Functionally, involved in coproporphyrin-dependent heme b biosynthesis. Catalyzes the insertion of ferrous iron into coproporphyrin III to form Fe-coproporphyrin III. The sequence is that of Coproporphyrin III ferrochelatase from Listeria monocytogenes serovar 1/2a (strain ATCC BAA-679 / EGD-e).